Consider the following 280-residue polypeptide: Gastrula zinc finger protein XlCGF46.1 (280 aa).

C2H2-type zinc fingers lie at residues 6-28 (FACKECGKSFSNKAYFESHKLMH), 34-56 (FECTECGKQFLLKQLLKSHQLIH), 62-84 (FVCPECGQGYKSKQGLQNHLLCH), 90-112 (FTCKECGKKFLLQKHLNRHKLTH), 118-140 (FICSECGKRFSRKDGLGMHQLIH), 146-168 (YVCTECGTSFRVRPQLRIHLRTH), 174-196 (FKCEDCGRVFATGTKLQVHKVTH), 202-224 (FTCEKCGKSFTQKTNLNTHQLTH), 230-252 (FKCEECGKCFSRKDYLRVHQRFH), and 258-280 (YKCNECEESFCRKDLLQTHELSH).

Belongs to the krueppel C2H2-type zinc-finger protein family.

The protein localises to the nucleus. Its function is as follows. May be involved in transcriptional regulation. This Xenopus laevis (African clawed frog) protein is Gastrula zinc finger protein XlCGF46.1.